The sequence spans 36 residues: Ostricacin-1 (36 aa).

3 cysteine pairs are disulfide-bonded: Cys-3-Cys-29, Cys-8-Cys-23, and Cys-13-Cys-30.

The protein resides in the secreted. Its function is as follows. Has antibacterial activity against the Gram-positive bacteria S.aureus 1056 MRSA (MIC=1.25 ug/ml) and S.aureus NCTC 4163 (MIC=6.7 ug/ml), and the Gram-negative bacteria E.coli O157:H7 (MIC=0.96 ug/ml) and E.coli 0111 (MIC=6.7 ug/ml). Does not have antifungal activity against the yeast C.albicans 3153A. The protein is Ostricacin-1 of Struthio camelus (Common ostrich).